The following is a 92-amino-acid chain: Cell division protein FtsB (92 aa).

The Cytoplasmic segment spans residues 1–3; sequence MRL. Residues 4-21 form a helical membrane-spanning segment; that stretch reads LILILLSVLVLFQHDFWF. Over 22 to 92 the chain is Periplasmic; that stretch reads GSNGFLDYRQ…VFYHIVKESK (71 aa). Residues 28–63 are a coiled coil; it reads DYRQNAEKIKENQAENEKLSQRNQRINAEIQGLTKG.

The protein belongs to the FtsB family. In terms of assembly, part of a complex composed of FtsB, FtsL and FtsQ.

It localises to the cell inner membrane. Functionally, essential cell division protein. May link together the upstream cell division proteins, which are predominantly cytoplasmic, with the downstream cell division proteins, which are predominantly periplasmic. This chain is Cell division protein FtsB, found in Haemophilus influenzae (strain PittEE).